A 1074-amino-acid chain; its full sequence is MPKRSDIKKVLLIGSGPIQIGQAAEFDFSGSQACKSLREEGVEVVLVNSNPATIMTDPDMADKVYIEPLVPEIVAKIIEKERPDGIIAGIGGQTGLNITSELAEMGVLEKYGVEVLGTKVRSIQEAEDRDLFKKAMERIGEPVPRSIAVTSLEEAEEAMKELGLPLIVRPAYTLGGSGGGVARTHEELMRICEMGLKRSRIHQVLLEESVIGWTEVEYEVMRDSNNTCITICNMENMDPMGIHTGESIVVTPIQTLSDHEIQMLRSAAINIIRALGIEGGCNIQFAVRNGEYRVIEVNPRVSRSSALASKATGYPIARVTAKIAIGLTLDEIRNDVTKETPASFEPTVDYVVIKIPRWPFDKFVKADRTLTTSMKSTGEVMAIGRSYEEALMKAIRSLDIDIDLGYNGKYVPWTDDDVRELLRTPTDERLFAIYQALRRGFSVEEISQLSMIDPYFIERIQNIIRMEDELKNGLTPDRLRRAKKMGFLDSRIAELVGLSREEVTDYRLSLGIIPTYKMVDTCAAEFAASTPYYYSTYDEECELNPSDNKKVLILGSGPIRIGQGIEFDYCTVHAVTALREMGIEAHIINNNPETVSTDYDTSDKLFFEPVTLEDVMNVIEKERYWGVMVQFGGQTAVNLAVPLEKELKRRGLKTVILGTSPDSIDIAEDRERFNKLLNKLGIPQPKAGIAYSPEEAKRVAKEIGYPVLVRPSYVLGGRAMEIVYDESGLELYMREAVRVSHEHPVLIDDFLQNAVEIDVDAVSDGRDVLIGAIMEHIEEAGIHSGDSACMIPPQTLPEDVIATVKDYVRRIALALDVKGIINIQMAYKDGIVYVLEANPRSSRTIPFVSKAVGLPLAKIAAKVMAGNTLREMNLNVEPEIPYVAVKEVLLPFDKLPGADVLLGPEMRSTGEVMGIDYNMGLSFFKAEMSAENNLPLDGIVFISVRDEDKAEIAEVARRFVNAGLKIIATDGTSGYLRGSGVPAERVRKIYHGSPNVLDYIRRGEVKLIINTPTTKQSVKDGFQIRRSAVDYHVPYITTVQAAKAAAEAIEKALRGELTIKALDEYHREVRYRAL.

Positions 1–399 (MPKRSDIKKV…ALMKAIRSLD (399 aa)) are carboxyphosphate synthetic domain. The ATP site is built by R129, R169, G175, G176, E208, V210, E215, G241, I242, H243, Q284, and E296. The ATP-grasp 1 domain occupies 133 to 325 (KKAMERIGEP…IARVTAKIAI (193 aa)). Mg(2+)-binding residues include Q284, E296, and N298. The Mn(2+) site is built by Q284, E296, and N298. The segment at 400–543 (IDIDLGYNGK…YSTYDEECEL (144 aa)) is oligomerization domain. The tract at residues 544–933 (NPSDNKKVLI…FKAEMSAENN (390 aa)) is carbamoyl phosphate synthetic domain. Positions 674–865 (NKLLNKLGIP…LAKIAAKVMA (192 aa)) constitute an ATP-grasp 2 domain. R710, D749, L751, E756, G781, I782, H783, S784, Q824, and E836 together coordinate ATP. Positions 824, 836, and 838 each coordinate Mg(2+). Mn(2+) is bound by residues Q824, E836, and N838. Residues 932–1074 (NNLPLDGIVF…YHREVRYRAL (143 aa)) form the MGS-like domain. Residues 934-1074 (LPLDGIVFIS…YHREVRYRAL (141 aa)) form an allosteric domain region.

This sequence belongs to the CarB family. Composed of two chains; the small (or glutamine) chain promotes the hydrolysis of glutamine to ammonia, which is used by the large (or ammonia) chain to synthesize carbamoyl phosphate. Tetramer of heterodimers (alpha,beta)4. It depends on Mg(2+) as a cofactor. Mn(2+) is required as a cofactor.

It catalyses the reaction hydrogencarbonate + L-glutamine + 2 ATP + H2O = carbamoyl phosphate + L-glutamate + 2 ADP + phosphate + 2 H(+). The enzyme catalyses hydrogencarbonate + NH4(+) + 2 ATP = carbamoyl phosphate + 2 ADP + phosphate + 2 H(+). The protein operates within amino-acid biosynthesis; L-arginine biosynthesis; carbamoyl phosphate from bicarbonate: step 1/1. It participates in pyrimidine metabolism; UMP biosynthesis via de novo pathway; (S)-dihydroorotate from bicarbonate: step 1/3. Functionally, large subunit of the glutamine-dependent carbamoyl phosphate synthetase (CPSase). CPSase catalyzes the formation of carbamoyl phosphate from the ammonia moiety of glutamine, carbonate, and phosphate donated by ATP, constituting the first step of 2 biosynthetic pathways, one leading to arginine and/or urea and the other to pyrimidine nucleotides. The large subunit (synthetase) binds the substrates ammonia (free or transferred from glutamine from the small subunit), hydrogencarbonate and ATP and carries out an ATP-coupled ligase reaction, activating hydrogencarbonate by forming carboxy phosphate which reacts with ammonia to form carbamoyl phosphate. The sequence is that of Carbamoyl phosphate synthase large chain from Methanothrix thermoacetophila (strain DSM 6194 / JCM 14653 / NBRC 101360 / PT) (Methanosaeta thermophila).